The primary structure comprises 278 residues: Large ribosomal subunit protein uL2 (278 aa).

Residues 201 to 278 (HGNINDGKAG…IMRSRHQRKK (78 aa)) are disordered. Positions 210–221 (GRSRWRGKRPHV) are enriched in basic residues.

The protein belongs to the universal ribosomal protein uL2 family. As to quaternary structure, part of the 50S ribosomal subunit. Forms a bridge to the 30S subunit in the 70S ribosome.

Its function is as follows. One of the primary rRNA binding proteins. Required for association of the 30S and 50S subunits to form the 70S ribosome, for tRNA binding and peptide bond formation. It has been suggested to have peptidyltransferase activity; this is somewhat controversial. Makes several contacts with the 16S rRNA in the 70S ribosome. This chain is Large ribosomal subunit protein uL2, found in Sinorhizobium fredii (strain NBRC 101917 / NGR234).